We begin with the raw amino-acid sequence, 319 residues long: ATP-dependent 6-phosphofructokinase (319 aa).

Gly11 serves as a coordination point for ATP. 21–25 (RAVVR) lines the ADP pocket. ATP contacts are provided by residues 72-73 (RC) and 102-105 (GDGS). Residue Asp103 coordinates Mg(2+). Substrate is bound at residue 125 to 127 (TID). Asp127 functions as the Proton acceptor in the catalytic mechanism. Arg154 serves as a coordination point for ADP. Substrate contacts are provided by residues Arg162 and 169-171 (MGR). ADP contacts are provided by residues 185-187 (GAE), Arg211, and 213-215 (KKH). Substrate-binding positions include Glu222, Arg243, and 249-252 (HIQR).

Belongs to the phosphofructokinase type A (PFKA) family. ATP-dependent PFK group I subfamily. Prokaryotic clade 'B1' sub-subfamily. As to quaternary structure, homotetramer. Requires Mg(2+) as cofactor.

Its subcellular location is the cytoplasm. The enzyme catalyses beta-D-fructose 6-phosphate + ATP = beta-D-fructose 1,6-bisphosphate + ADP + H(+). It functions in the pathway carbohydrate degradation; glycolysis; D-glyceraldehyde 3-phosphate and glycerone phosphate from D-glucose: step 3/4. With respect to regulation, allosterically activated by ADP and other diphosphonucleosides, and allosterically inhibited by phosphoenolpyruvate. Its function is as follows. Catalyzes the phosphorylation of D-fructose 6-phosphate to fructose 1,6-bisphosphate by ATP, the first committing step of glycolysis. The chain is ATP-dependent 6-phosphofructokinase from Halalkalibacterium halodurans (strain ATCC BAA-125 / DSM 18197 / FERM 7344 / JCM 9153 / C-125) (Bacillus halodurans).